An 832-amino-acid chain; its full sequence is Protein P (832 aa).

The tract at residues 1–177 (MPLSYQHFRR…FCGSPYSWEQ (177 aa)) is terminal protein domain (TP). Positions 178–335 (ELQHGAESFH…YCLSHIVNLL (158 aa)) are spacer. The tract at residues 241–263 (RRPFGVEPSGSGHTTNLASKSAS) is disordered. Residues 251-263 (SGHTTNLASKSAS) are compositionally biased toward polar residues. Positions 336 to 679 (EDWGPCAEHG…YLNLYPVARQ (344 aa)) are polymerase/reverse transcriptase domain (RT). In terms of domain architecture, Reverse transcriptase spans 346–589 (EHHIRIPRTP…YSLHFMGYVI (244 aa)). Mg(2+)-binding residues include D418, D540, and D541.

The protein belongs to the hepadnaviridae P protein family.

It catalyses the reaction DNA(n) + a 2'-deoxyribonucleoside 5'-triphosphate = DNA(n+1) + diphosphate. It carries out the reaction Endonucleolytic cleavage to 5'-phosphomonoester.. With respect to regulation, activated by host HSP70 and HSP40 in vitro to be able to bind the epsilon loop of the pgRNA. Because deletion of the RNase H region renders the protein partly chaperone-independent, the chaperones may be needed indirectly to relieve occlusion of the RNA-binding site by this domain. Inhibited by several reverse-transcriptase inhibitors: Lamivudine, Adefovir and Entecavir. In terms of biological role, multifunctional enzyme that converts the viral RNA genome into dsDNA in viral cytoplasmic capsids. This enzyme displays a DNA polymerase activity that can copy either DNA or RNA templates, and a ribonuclease H (RNase H) activity that cleaves the RNA strand of RNA-DNA heteroduplexes in a partially processive 3'- to 5'-endonucleasic mode. Neo-synthesized pregenomic RNA (pgRNA) are encapsidated together with the P protein, and reverse-transcribed inside the nucleocapsid. Initiation of reverse-transcription occurs first by binding the epsilon loop on the pgRNA genome, and is initiated by protein priming, thereby the 5'-end of (-)DNA is covalently linked to P protein. Partial (+)DNA is synthesized from the (-)DNA template and generates the relaxed circular DNA (RC-DNA) genome. After budding and infection, the RC-DNA migrates in the nucleus, and is converted into a plasmid-like covalently closed circular DNA (cccDNA). The activity of P protein does not seem to be necessary for cccDNA generation, and is presumably released from (+)DNA by host nuclear DNA repair machinery. This Homo sapiens (Human) protein is Protein P.